The primary structure comprises 422 residues: Adhesin YadA (422 aa).

Residues 1–25 form the signal peptide; that stretch reads MTKDFKISVSAALISALFSSPYAFA. The tract at residues 26-330 is surface exposed passenger domain; it reads NNDEVHFTAV…KKAIRESNQY (305 aa). Positions 216-362 form a coiled coil; that stretch reads EKTQENANKK…LASSAALNSL (147 aa). The segment at 331-369 is outer membrane translocation of the passenger domain; sequence TDHKFHQLDNRLDKLDTRVDKGLASSAALNSLFQPYGVG. Beta stranded transmembrane passes span 369–379, 383–394, 401–407, and 411–422; these read GKVNFTAGVGG, SQALAIGSGYRV, KAGVAYA, and DVMYNASFNIEW. Residues 370–422 form a translocator domain region; sequence KVNFTAGVGGYRSSQALAIGSGYRVNESVALKAGVAYAGSSDVMYNASFNIEW.

It belongs to the autotransporter-2 (AT-2) (TC 1.B.40) family. In terms of assembly, homotrimer.

The protein resides in the cell surface. It localises to the cell outer membrane. Its function is as follows. Collagen-binding outer membrane protein forming a fibrillar matrix on the bacterial cell surface. Promotes initial attachment and invasion of eukaryotic cells. Also protects the bacteria by being responsible for agglutination, serum resistance, complement inactivation and phagocytosis resistance. The protein is Adhesin YadA (yadA) of Yersinia enterocolitica.